Consider the following 196-residue polypeptide: Phosphoheptose isomerase (196 aa).

Positions 35–194 constitute an SIS domain; it reads LTACLRCGGK…EKELFTPSGQ (160 aa). Substrate is bound at residue 50–52; the sequence is NGG. His59 and Glu63 together coordinate Zn(2+). Substrate-binding positions include Glu63, 92-93, 118-120, Ser123, and Gln170; these read ND and STS. Positions 170 and 178 each coordinate Zn(2+).

This sequence belongs to the SIS family. GmhA subfamily. As to quaternary structure, homotetramer. Zn(2+) is required as a cofactor.

The protein localises to the cytoplasm. It catalyses the reaction 2 D-sedoheptulose 7-phosphate = D-glycero-alpha-D-manno-heptose 7-phosphate + D-glycero-beta-D-manno-heptose 7-phosphate. It participates in carbohydrate biosynthesis; D-glycero-D-manno-heptose 7-phosphate biosynthesis; D-glycero-alpha-D-manno-heptose 7-phosphate and D-glycero-beta-D-manno-heptose 7-phosphate from sedoheptulose 7-phosphate: step 1/1. Functionally, catalyzes the isomerization of sedoheptulose 7-phosphate in D-glycero-D-manno-heptose 7-phosphate. This chain is Phosphoheptose isomerase, found in Syntrophotalea carbinolica (strain DSM 2380 / NBRC 103641 / GraBd1) (Pelobacter carbinolicus).